The primary structure comprises 365 residues: MLKKVTPLFLVAAVAACSSPLERRQANGGEDYVQAEQAPMLKIPEGLKTPPYNKEYDVPALGPKANPALVGKNLDIRPPLQVLPMAEGTHVEEGSDNIKIVVESIDNNVDLKQEIFTNLDDFFAKQAIPIRSRDFDKGSIETDWIESREVLESSLWGSDKEYLLRQRYRFDVETRPHGRTANIVIHLVEHEEFYDGKEQKVMLSGEDKQRYTIDMLNSAIAYMSVKREQTIQANRLKQTLGINVDLITPEEGAAYWSAKAAYKQVWDRLRIVLPEMGFEISDMDSAKGLYFIKFTDNSGFWSSLWNNNQLSLKEGSYRLLLEDGDTPDETKIWLRDAEDQPLSNDVVSKVYESLSSLMKEERKLR.

The signal sequence occupies residues 1–16; that stretch reads MLKKVTPLFLVAAVAA. The N-palmitoyl cysteine moiety is linked to residue Cys17. The S-diacylglycerol cysteine moiety is linked to residue Cys17.

It belongs to the BamC family. In terms of assembly, part of the Bam complex.

The protein resides in the cell outer membrane. Its function is as follows. Part of the outer membrane protein assembly complex, which is involved in assembly and insertion of beta-barrel proteins into the outer membrane. The protein is Outer membrane protein assembly factor BamC of Shewanella oneidensis (strain ATCC 700550 / JCM 31522 / CIP 106686 / LMG 19005 / NCIMB 14063 / MR-1).